The following is a 281-amino-acid chain: Ribose-phosphate pyrophosphokinase (281 aa).

Residues 33–35 (DGE) and 90–91 (RQ) each bind ATP. Residues H123 and D161 each coordinate Mg(2+). K185 is a catalytic residue. R187 and D211 together coordinate D-ribose 5-phosphate.

It belongs to the ribose-phosphate pyrophosphokinase family. Class III (archaeal) subfamily. Mg(2+) is required as a cofactor.

The protein resides in the cytoplasm. The enzyme catalyses D-ribose 5-phosphate + ATP = 5-phospho-alpha-D-ribose 1-diphosphate + AMP + H(+). Its pathway is metabolic intermediate biosynthesis; 5-phospho-alpha-D-ribose 1-diphosphate biosynthesis; 5-phospho-alpha-D-ribose 1-diphosphate from D-ribose 5-phosphate (route I): step 1/1. Functionally, involved in the biosynthesis of the central metabolite phospho-alpha-D-ribosyl-1-pyrophosphate (PRPP) via the transfer of pyrophosphoryl group from ATP to 1-hydroxyl of ribose-5-phosphate (Rib-5-P). This Halobacterium salinarum (strain ATCC 29341 / DSM 671 / R1) protein is Ribose-phosphate pyrophosphokinase.